A 205-amino-acid polypeptide reads, in one-letter code: Small ribosomal subunit protein uS4 (205 aa).

The tract at residues 25 to 48 (KTIEARPTPPGQHGAKNTRRKKSD) is disordered. The S4 RNA-binding domain maps to 94-157 (RRLDNVVFRA…TKLPIVVETL (64 aa)).

It belongs to the universal ribosomal protein uS4 family. In terms of assembly, part of the 30S ribosomal subunit. Contacts protein S5. The interaction surface between S4 and S5 is involved in control of translational fidelity.

Functionally, one of the primary rRNA binding proteins, it binds directly to 16S rRNA where it nucleates assembly of the body of the 30S subunit. In terms of biological role, with S5 and S12 plays an important role in translational accuracy. The polypeptide is Small ribosomal subunit protein uS4 (Methylobacillus flagellatus (strain ATCC 51484 / DSM 6875 / VKM B-1610 / KT)).